Reading from the N-terminus, the 189-residue chain is Elongation factor P (189 aa).

At K34 the chain carries N6-(3,6-diaminohexanoyl)-5-hydroxylysine.

It belongs to the elongation factor P family. In terms of processing, may be beta-lysylated on the epsilon-amino group of Lys-34 by the combined action of EpmA and EpmB, and then hydroxylated on the C5 position of the same residue by EpmC (if this protein is present). Lysylation is critical for the stimulatory effect of EF-P on peptide-bond formation. The lysylation moiety may extend toward the peptidyltransferase center and stabilize the terminal 3-CCA end of the tRNA. Hydroxylation of the C5 position on Lys-34 may allow additional potential stabilizing hydrogen-bond interactions with the P-tRNA.

It localises to the cytoplasm. It participates in protein biosynthesis; polypeptide chain elongation. Functionally, involved in peptide bond synthesis. Alleviates ribosome stalling that occurs when 3 or more consecutive Pro residues or the sequence PPG is present in a protein, possibly by augmenting the peptidyl transferase activity of the ribosome. Modification of Lys-34 is required for alleviation. This is Elongation factor P from Baumannia cicadellinicola subsp. Homalodisca coagulata.